Consider the following 399-residue polypeptide: MTRTVLVLNSGSSSLKFQLLEPDSGASLADGIVERIGEDSSSASLVCGEREVTHSERVPDHEAALRTAYGLFDEAGAELGSVGLVAVGHRVVHGGPDLYQPTLIDDALVDTLESLAPLAPLHNPPAVLGIRGARKAFPDLPHVAVFDTAYFHDLPAAAATYAIDRDLSEQWHIRRYGFHGTSHQYVSEQAALFLDVPLSSLSQIVLHLGNGASASAILGGRPIDTSMGLTPMEGLVMGTRSGDVDPGVLVYLWRTAGMSVDEIETMLNKRSGVRGLGGEIDFRVLHQRIESGDESDRENAQLAYDVYIHRLRKYIGAYLALLGSTDVIVFTAGVGENDAAVRRDALSGMGRLGIELDEHLNESPSHTARRISAETSPTTVLVIPTNEELAIARACVEVI.

Asn9 is a binding site for Mg(2+). Lys16 is an ATP binding site. Arg90 contacts substrate. Residue Asp147 is the Proton donor/acceptor of the active site. Residues 207 to 211 (HLGNG), 281 to 283 (DFR), and 333 to 337 (GVGEN) contribute to the ATP site. Glu387 contacts Mg(2+).

The protein belongs to the acetokinase family. As to quaternary structure, homodimer. Mg(2+) serves as cofactor. Requires Mn(2+) as cofactor.

It localises to the cytoplasm. It carries out the reaction acetate + ATP = acetyl phosphate + ADP. It functions in the pathway metabolic intermediate biosynthesis; acetyl-CoA biosynthesis; acetyl-CoA from acetate: step 1/2. Functionally, catalyzes the formation of acetyl phosphate from acetate and ATP. Can also catalyze the reverse reaction. In Mycobacterium sp. (strain JLS), this protein is Acetate kinase.